The following is a 132-amino-acid chain: Fatty acid-binding protein, adipocyte (132 aa).

N-acetylcysteine is present on Cys2. Ser13 bears the Phosphoserine mark. Residue Tyr20 is modified to Phosphotyrosine; by Tyr-kinases. Residues 22-32 carry the Nuclear localization signal motif; it reads KEVGVGFATRK. Residue 127–129 coordinates a fatty acid; that stretch reads RVY.

This sequence belongs to the calycin superfamily. Fatty-acid binding protein (FABP) family. Monomer. Homodimer. Interacts with PPARG.

Its subcellular location is the cytoplasm. It is found in the nucleus. Its function is as follows. Lipid transport protein in adipocytes. Binds both long chain fatty acids and retinoic acid. Delivers long-chain fatty acids and retinoic acid to their cognate receptors in the nucleus. This chain is Fatty acid-binding protein, adipocyte (FABP4), found in Cervus elaphus (Red deer).